The sequence spans 137 residues: Flagellar basal body rod protein FlgB (137 aa).

This sequence belongs to the flagella basal body rod proteins family. As to quaternary structure, the basal body constitutes a major portion of the flagellar organelle and consists of a number of rings mounted on a central rod. In Gram-negative bacteria, at least four rings, L, P, S and M are present, whereas Gram-positive bacteria lack the L and P rings. The rod consists of about 26 subunits of FlgG in the distal portion, and FlgB, FlgC and FlgF build up the proximal portion of the rod with about 6 subunits each. Rod assembly occurs by export via the flagellum-specific pathway of its constituent proteins and by their incorporation into the rod structure in the probable order of FlgB, FlgC, FlgF and FlgG. Another protein, FliE, also assembles onto the stable rod structure.

It localises to the bacterial flagellum basal body. Functionally, structural component of flagellum, the bacterial motility apparatus. Part of the rod structure of flagellar basal body. The sequence is that of Flagellar basal body rod protein FlgB from Proteus mirabilis (strain HI4320).